Here is a 509-residue protein sequence, read N- to C-terminus: MIMQLGLTSLAFLALKCDAYNIAPKIDTPNVEPFAPSGGLKLLAIVAIIWYVVVLLVAYYGFFEIMQKFSKRKTLPVPPQVEGVTILRPIKGIDPEMELCLQSAFDQDYPKFEIIICVESENDPGIGVAEALIRKYPHVDARILKGDSHNPDHFGPNPKVNNLAKGYSAGKYDIMWILDSNVWVCSGALSRSVDALNRSLDNGRSTFDFQTGKGRKVNLVHHVPMAISINPQTGTNLDEMFLFTSHSKFYISINKAALAPCVNGKSNLYRRSELDLAVKRLGKGSEPSLDGTTGILAKDAAYYGSKPGQGLRFFARYIGEDNMIATALWFQNGGRTGLTGDAAIQPLGGVNSTSLKNYLLRRIRWLRVRKHMVLEATLLEPTTECLLCGTFGTFAISTLFLQSYFNWKFFIFHLLVWMVTDYTQFHILLTNASQDTATCNVPYFAEPNFNAYGSPFESSNLRTFHRWVLYWLLREVLALPIWISAMLGTRIIWRNRPFRINVDLSAEEL.

At 1–42 (MIMQLGLTSLAFLALKCDAYNIAPKIDTPNVEPFAPSGGLKL) the chain is on the lumenal side. The chain crosses the membrane as a helical span at residues 43–63 (LAIVAIIWYVVVLLVAYYGFF). The Cytoplasmic portion of the chain corresponds to 64–384 (EIMQKFSKRK…EATLLEPTTE (321 aa)). Position 123 (Asp-123) is a short sequence motif, D1. A short sequence motif (D2) is located at residue Asp-179. A short sequence motif (D3) is located at residue Asp-321. The active-site Proton acceptor is Asp-321. Positions 361–365 (RRIRW) match the (Q/R)XXRW motif. Residues 385–405 (CLLCGTFGTFAISTLFLQSYF) form a helical membrane-spanning segment. At 406-408 (NWK) the chain is on the lumenal side. A helical transmembrane segment spans residues 409–429 (FFIFHLLVWMVTDYTQFHILL). Over 430-466 (TNASQDTATCNVPYFAEPNFNAYGSPFESSNLRTFHR) the chain is Cytoplasmic. A helical membrane pass occupies residues 467 to 487 (WVLYWLLREVLALPIWISAML). Residues 488 to 509 (GTRIIWRNRPFRINVDLSAEEL) are Lumenal-facing.

This sequence belongs to the glycosyltransferase 2 family.

The protein resides in the golgi apparatus membrane. The enzyme catalyses an N-acylsphing-4-enine + UDP-alpha-D-glucose = a beta-D-glucosyl-(1&lt;-&gt;1')-N-acylsphing-4-enine + UDP + H(+). The protein operates within lipid metabolism; sphingolipid metabolism. Functionally, catalyzes the final step in the biosynthesis of the membrane lipid glucosylceramide (GluCer), the transfer of glucose to ceramide. Glucosylceramides play important roles in growth, differentiation and pathogenicity. This Komagataella phaffii (strain GS115 / ATCC 20864) (Yeast) protein is Ceramide glucosyltransferase.